Here is a 403-residue protein sequence, read N- to C-terminus: MTKYVLVLNSGSSSIKFQVLDPEANATADPFVSGIVEKIGEKKGHIQIQTETSKMEDNRPILSHSVGLERAFGMMTLLGVGPQDLDLVAAGHRVVHGGATFTEPVLIDDEVIEQLKELIPLAPLHNPANIDGIENARALLEHVPHVAVFDTAFFSTLPEHAANYAIKKDIADEYNIRRYGFHGTSHEYVSSKVPDLLGKPAEEVNQITLHLGNGASAAAIRGGEAVDTTMGLTPLAGLVMGTRSGDIDPGIIFHLARSGGMTVDQADKLLNRESGLKGMAGVNDFRELKTLIEDGDENAQLAYDVYIHALRRFIGSYMLILGGVDAIVFTAGVGENAVQVRRDAMADLQNFGIEIDDARNENSEGIVGAREISTDDSTVKVFVVPTNEELAIARQATELAEQQ.

N9 is a Mg(2+) binding site. Residue K16 participates in ATP binding. Position 93 (R93) interacts with substrate. Catalysis depends on D150, which acts as the Proton donor/acceptor. ATP-binding positions include 210–214, 284–286, and 332–336; these read HLGNG, DFR, and GVGEN. Position 388 (E388) interacts with Mg(2+).

This sequence belongs to the acetokinase family. As to quaternary structure, homodimer. It depends on Mg(2+) as a cofactor. Requires Mn(2+) as cofactor.

It localises to the cytoplasm. It carries out the reaction acetate + ATP = acetyl phosphate + ADP. Its pathway is metabolic intermediate biosynthesis; acetyl-CoA biosynthesis; acetyl-CoA from acetate: step 1/2. In terms of biological role, catalyzes the formation of acetyl phosphate from acetate and ATP. Can also catalyze the reverse reaction. This chain is Acetate kinase, found in Corynebacterium jeikeium (strain K411).